The primary structure comprises 252 residues: Triosephosphate isomerase (252 aa).

10–12 lines the substrate pocket; it reads NWK. Catalysis depends on histidine 96, which acts as the Electrophile. Glutamate 168 functions as the Proton acceptor in the catalytic mechanism. Residues glycine 174, serine 214, and 235-236 each bind substrate; that span reads GG.

This sequence belongs to the triosephosphate isomerase family. In terms of assembly, homodimer.

It localises to the cytoplasm. The enzyme catalyses D-glyceraldehyde 3-phosphate = dihydroxyacetone phosphate. It participates in carbohydrate biosynthesis; gluconeogenesis. Its pathway is carbohydrate degradation; glycolysis; D-glyceraldehyde 3-phosphate from glycerone phosphate: step 1/1. In terms of biological role, involved in the gluconeogenesis. Catalyzes stereospecifically the conversion of dihydroxyacetone phosphate (DHAP) to D-glyceraldehyde-3-phosphate (G3P). This Lactobacillus delbrueckii subsp. bulgaricus (strain ATCC 11842 / DSM 20081 / BCRC 10696 / JCM 1002 / NBRC 13953 / NCIMB 11778 / NCTC 12712 / WDCM 00102 / Lb 14) protein is Triosephosphate isomerase.